Here is a 541-residue protein sequence, read N- to C-terminus: MGFFSTILGFCGFGVGISLGLVIGYVLFVYLLPNDVKDPEIRSIADQDPKAMLRMLPEIPLWVKNPDFDRVDWINRFLEYMWPYLDKAICKTAKNIAKPIIEEQIPKYKIDSVEFETLTLGSLPPTFQGMKVYLTDEKELIMEPCLKWAANPNILVAIKAFGLKATVQVVDLQVFAQPRITLKPLVPSFPCFANIYVSLMEKPHVDFGLKLGGADLMSIPGLYRFVQEQIKDQVANMYLWPKTLVVPILDPAKAFRRPVGIVHVKVVRAVGLRKKDLMGGADPFVKIKLSEDKIPSKKTTVKHKNLNPEWNEEFKFSVRDPQTQVLEFSVYDWEQVGNPEKMGMNVLALKEMVPDEHKAFTLELRKTLDGGEDGQPPDKYRGKLEVELLYKPFTEEEMPKGFEETQAVQKAPEGTPAAGGMLVVIVHSAEDVEGKHHTNPYVRIYFKGEERKTKHVKKNRDPRWNEEFTFMLEEPPVREKLHVEVLSTSSRIGLLHPKETLGYVDIPVVDVVNNKRMNQKFHLIDSKNGKIQIELEWRTAS.

The Extracellular portion of the chain corresponds to 1 to 11 (MGFFSTILGFC). The chain crosses the membrane as a helical span at residues 12–32 (GFGVGISLGLVIGYVLFVYLL). Residues 33-541 (PNDVKDPEIR…QIELEWRTAS (509 aa)) lie on the Cytoplasmic side of the membrane. In terms of domain architecture, SMP-LTD spans 67–249 (DFDRVDWINR…WPKTLVVPIL (183 aa)). The segment at 227–509 (QEQIKDQVAN…TLGYVDIPVV (283 aa)) is phospholipid binding. 2 C2 domains span residues 240–362 (WPKT…AFTL) and 401–521 (GFEE…NQKF). The Ca(2+) site is built by Asp-276, Asp-282, Asp-332, and Glu-334.

It belongs to the synaptotagmin family. Interacts with cabbage leaf curl virus (CaLCuV) BC1 protein and tobacco mosaic virus (TMV) MP protein. Interacts with ROSY1. It depends on Ca(2+) as a cofactor. Expressed in roots, shoots, rosette and cauline leaves, inflorescences, and siliques. In roots, expressed in vascular bundle, epidermis, the differential zone of the tips of root hairs, and the quiescent center and columella of root tips.

The protein localises to the cell membrane. Its subcellular location is the endosome membrane. Its function is as follows. Plays an important role in maintaining plasma membrane integrity during freezing and osmotic stresses. May function in membrane resealing during calcium-dependent freezing tolerance. May regulate endocytosis and endosome recycling at the plasma membrane and cell-to-cell trafficking of cabbage leaf curl virus (CaLCuV) and tobacco mosaic virus (TMV) movement proteins via plasmodesmata. The chain is Synaptotagmin-1 (SYT1) from Arabidopsis thaliana (Mouse-ear cress).